Consider the following 320-residue polypeptide: Cytochrome f (320 aa).

The first 35 residues, 1 to 35, serve as a signal peptide directing secretion; that stretch reads MQNRNTFSWIKEQMTRSISVSIMIYVITRTAISNA. 4 residues coordinate heme: Y36, C56, C59, and H60. Residues 286 to 306 form a helical membrane-spanning segment; it reads VQGLLFFLASVILAQIFLVLK.

Belongs to the cytochrome f family. The 4 large subunits of the cytochrome b6-f complex are cytochrome b6, subunit IV (17 kDa polypeptide, petD), cytochrome f and the Rieske protein, while the 4 small subunits are PetG, PetL, PetM and PetN. The complex functions as a dimer. Heme is required as a cofactor.

It is found in the plastid. Its subcellular location is the chloroplast thylakoid membrane. Component of the cytochrome b6-f complex, which mediates electron transfer between photosystem II (PSII) and photosystem I (PSI), cyclic electron flow around PSI, and state transitions. The chain is Cytochrome f from Platanus occidentalis (Sycamore).